Consider the following 583-residue polypeptide: COP9 signalosome complex subunit 10 (583 aa).

Positions 1 to 35 are enriched in acidic residues; it reads MSDEEDYAEYMMSEEDMSSFEMDVDSDVEPDDAGL. A disordered region spans residues 1–55; it reads MSDEEDYAEYMMSEEDMSSFEMDVDSDVEPDDAGLEQDQQVTGDDYDGSAGNSGD. Residues 297-485 enclose the PCI domain; the sequence is DHYNQSQMLS…DYVYFGEEYF (189 aa).

Component of a COP9 signalosome-like (CSN) complex.

It is found in the cytoplasm. Its subcellular location is the nucleus. Its function is as follows. Component of the COP9 signalosome (CSN) complex that acts as an regulator of the ubiquitin (Ubl) conjugation pathway by mediating the deneddylation of the cullin subunit of SCF-type E3 ubiquitin-protein ligase complexes. The CSN complex is involved in the regulation of the mating pheromone response. This is COP9 signalosome complex subunit 10 (RRI2) from Kluyveromyces lactis (strain ATCC 8585 / CBS 2359 / DSM 70799 / NBRC 1267 / NRRL Y-1140 / WM37) (Yeast).